The chain runs to 227 residues: 2,3-bisphosphoglycerate-dependent phosphoglycerate mutase (227 aa).

Substrate contacts are provided by residues 7-14 (RHGLSEWN), 20-21 (TG), arginine 59, 86-89 (ERHY), lysine 97, 113-114 (RR), and 182-183 (GN). The active-site Tele-phosphohistidine intermediate is the histidine 8. Catalysis depends on glutamate 86, which acts as the Proton donor/acceptor.

The protein belongs to the phosphoglycerate mutase family. BPG-dependent PGAM subfamily. Homodimer.

It carries out the reaction (2R)-2-phosphoglycerate = (2R)-3-phosphoglycerate. It participates in carbohydrate degradation; glycolysis; pyruvate from D-glyceraldehyde 3-phosphate: step 3/5. Functionally, catalyzes the interconversion of 2-phosphoglycerate and 3-phosphoglycerate. This chain is 2,3-bisphosphoglycerate-dependent phosphoglycerate mutase, found in Actinobacillus succinogenes (strain ATCC 55618 / DSM 22257 / CCUG 43843 / 130Z).